Consider the following 122-residue polypeptide: UPF0231 protein VIBHAR_03438 (122 aa).

The protein belongs to the UPF0231 family.

This chain is UPF0231 protein VIBHAR_03438, found in Vibrio campbellii (strain ATCC BAA-1116).